The following is a 987-amino-acid chain: Sarcosine oxidase subunit alpha (987 aa).

NAD(+) contacts are provided by Asp-198, Glu-199, Ser-206, Ala-244, and Gly-445. The (6R)-5,10-methylene-5,6,7,8-tetrahydrofolate site is built by Thr-714 and Glu-806.

It belongs to the GcvT family. In terms of assembly, heterotetramer composed of subunits alpha (SoxA), beta (SoxB), gamma (SoxG) and delta (SoxD). NAD(+) is required as a cofactor.

The protein resides in the cytoplasm. The enzyme catalyses sarcosine + (6S)-5,6,7,8-tetrahydrofolate + O2 = (6R)-5,10-methylene-5,6,7,8-tetrahydrofolate + glycine + H2O2. It carries out the reaction sarcosine + O2 + H2O = formaldehyde + glycine + H2O2. In terms of biological role, in the presence of tetrahydrofolate, catalyzes the oxidative demethylation of sarcosine to yield glycine, 5,10-methylenetetrahydrofolate and hydrogen peroxide. In the absence of tetrahydrofolate, catalyzes the oxidative demethylation of sarcosine to yield glycine, formaldehyde and hydrogen peroxide. This Rhizobium meliloti (strain 1021) (Ensifer meliloti) protein is Sarcosine oxidase subunit alpha (soxA).